The primary structure comprises 312 residues: Cathepsin O (312 aa).

The first 23 residues, 1-23, serve as a signal peptide directing secretion; the sequence is MKPQLVNLLLLCCCCLGRHGVAG. A propeptide spans 24–98 (activation peptide); sequence TWSWSHQREA…EGQRPIPNVS (75 aa). Residues Asn-53 and Asn-96 are each glycosylated (N-linked (GlcNAc...) asparagine). Cystine bridges form between Cys-120–Cys-161, Cys-154–Cys-195, and Cys-253–Cys-301. Cys-123 is a catalytic residue. Active-site residues include His-260 and Asn-280.

It belongs to the peptidase C1 family.

Its subcellular location is the lysosome. The catalysed reaction is The recombinant human enzyme hydrolyzes synthetic endopeptidase substrates including Z-Phe-Arg-NHMec and Z-Arg-Arg-NHMec.. Proteolytic enzyme possibly involved in normal cellular protein degradation and turnover. This chain is Cathepsin O (Ctso), found in Mus musculus (Mouse).